Reading from the N-terminus, the 422-residue chain is Killer cell immunoglobulin-like receptor 3DL1 (422 aa).

An N-terminal signal peptide occupies residues 1 to 21; the sequence is MMFEFLSLLCSGFFLVQRMSA. The Extracellular segment spans residues 22–329; sequence HMGSYDKPFL…KNLHIQIGLL (308 aa). 3 Ig-like C2-type domains span residues 42 to 100, 135 to 202, and 237 to 300; these read GQNV…HHQY, GENV…YNHS, and EQNM…FKNS. Asn44 is a glycosylation site (N-linked (GlcNAc...) asparagine). The cysteines at positions 49 and 95 are disulfide-linked. Asn137 carries an N-linked (GlcNAc...) asparagine glycan. Cys142 and Cys195 are disulfide-bonded. Residues Asn200 and Asn239 are each glycosylated (N-linked (GlcNAc...) asparagine). Cys244 and Cys293 are disulfide-bonded. Asn299 carries an N-linked (GlcNAc...) asparagine glycan. A helical membrane pass occupies residues 330 to 350; the sequence is VTMVLVIVVIIIIIIIIIIII. The Cytoplasmic portion of the chain corresponds to 351-422; it reads YYYYFSKKSS…DTVVYTEVMI (72 aa).

Belongs to the immunoglobulin superfamily.

It is found in the cell membrane. Its function is as follows. Receptor on natural killer (NK) cells. Inhibits the activity of NK cells thus preventing cell lysis. This Rattus norvegicus (Rat) protein is Killer cell immunoglobulin-like receptor 3DL1 (Kir3dl1).